Here is a 237-residue protein sequence, read N- to C-terminus: Speedy protein E4 (237 aa).

The interval 1–61 is disordered; that stretch reads MASGQARPPF…KRKSEWSDES (61 aa).

Belongs to the Speedy/Ringo family. As to expression, predominantly expressed in testis.

The protein is Speedy protein E4 of Homo sapiens (Human).